Reading from the N-terminus, the 146-residue chain is Snaclec coagulation factor IX/factor X-binding protein subunit B (146 aa).

An N-terminal signal peptide occupies residues Met-1 to Ala-23. Intrachain disulfides connect Cys-25–Cys-36, Cys-53–Cys-142, and Cys-119–Cys-134. One can recognise a C-type lectin domain in the interval Tyr-32–Glu-143. The Ca(2+) site is built by Ser-64 and Glu-70. Residue Glu-143 participates in Ca(2+) binding.

This sequence belongs to the snaclec family. As to quaternary structure, heterodimer with subunit A of IX/X-bp or IX-bp; disulfide-linked. In terms of tissue distribution, expressed by the venom gland.

It is found in the secreted. In terms of biological role, when linked to subunit A of IX/X-bp, anticoagulant protein which binds to the gamma-carboxyglutamic acid-domain regions of factors IX (F9) and factor X (F10) in the presence of calcium with a 1 to 1 stoichiometry. Its function is as follows. When linked to subunit A of IX-bp, anticoagulant protein which binds to the gamma-carboxyglutamic acid-domain regions of factor IX (but not to factor X) in the presence of calcium with a 1 to 1 stoichiometry. The polypeptide is Snaclec coagulation factor IX/factor X-binding protein subunit B (Gloydius halys (Chinese water mocassin)).